Reading from the N-terminus, the 351-residue chain is Methylthioribose-1-phosphate isomerase (351 aa).

Residues 55–57 (RGA), arginine 95, and glutamine 202 contribute to the substrate site. Residue aspartate 243 is the Proton donor of the active site. Residue 253-254 (NK) participates in substrate binding.

The protein belongs to the eIF-2B alpha/beta/delta subunits family. MtnA subfamily.

The catalysed reaction is 5-(methylsulfanyl)-alpha-D-ribose 1-phosphate = 5-(methylsulfanyl)-D-ribulose 1-phosphate. The protein operates within amino-acid biosynthesis; L-methionine biosynthesis via salvage pathway; L-methionine from S-methyl-5-thio-alpha-D-ribose 1-phosphate: step 1/6. Its function is as follows. Catalyzes the interconversion of methylthioribose-1-phosphate (MTR-1-P) into methylthioribulose-1-phosphate (MTRu-1-P). The chain is Methylthioribose-1-phosphate isomerase from Marinobacter nauticus (strain ATCC 700491 / DSM 11845 / VT8) (Marinobacter aquaeolei).